The following is a 432-amino-acid chain: Adenylosuccinate synthetase (432 aa).

GTP contacts are provided by residues 13–19 (GDEGKGK) and 41–43 (GHT). Asp14 (proton acceptor) is an active-site residue. Asp14 and Gly41 together coordinate Mg(2+). Residues 14-17 (DEGK), 39-42 (NAGH), Thr130, Arg144, Gln225, Thr240, and Arg304 contribute to the IMP site. The active-site Proton donor is the His42. 300-306 (ATTGRRR) is a binding site for substrate. GTP-binding positions include Arg306, 332 to 334 (KLD), and 415 to 417 (STG).

This sequence belongs to the adenylosuccinate synthetase family. As to quaternary structure, homodimer. The cofactor is Mg(2+).

The protein localises to the cytoplasm. The enzyme catalyses IMP + L-aspartate + GTP = N(6)-(1,2-dicarboxyethyl)-AMP + GDP + phosphate + 2 H(+). It participates in purine metabolism; AMP biosynthesis via de novo pathway; AMP from IMP: step 1/2. In terms of biological role, plays an important role in the de novo pathway of purine nucleotide biosynthesis. Catalyzes the first committed step in the biosynthesis of AMP from IMP. This chain is Adenylosuccinate synthetase, found in Cronobacter sakazakii (strain ATCC BAA-894) (Enterobacter sakazakii).